The following is a 307-amino-acid chain: Small ribosomal subunit biogenesis GTPase RsgA (307 aa).

The interval 1–21 (MPSEHPFSDGISTPNPKETMN) is disordered. The span at 10 to 21 (GISTPNPKETMN) shows a compositional bias: polar residues. Positions 85 to 242 (RQDAWKTKLI…LIDSPGLQEF (158 aa)) constitute a CP-type G domain. Residues 135 to 138 (NKAD) and 184 to 192 (GQSGMGKST) contribute to the GTP site. Zn(2+) is bound by residues Cys266, Cys271, His273, and Cys279.

The protein belongs to the TRAFAC class YlqF/YawG GTPase family. RsgA subfamily. Monomer. Associates with 30S ribosomal subunit, binds 16S rRNA. Zn(2+) is required as a cofactor.

It localises to the cytoplasm. Functionally, one of several proteins that assist in the late maturation steps of the functional core of the 30S ribosomal subunit. Helps release RbfA from mature subunits. May play a role in the assembly of ribosomal proteins into the subunit. Circularly permuted GTPase that catalyzes slow GTP hydrolysis, GTPase activity is stimulated by the 30S ribosomal subunit. The chain is Small ribosomal subunit biogenesis GTPase RsgA from Neisseria gonorrhoeae (strain NCCP11945).